Reading from the N-terminus, the 1849-residue chain is Breast cancer type 1 susceptibility protein homolog (1849 aa).

M1 carries the N-acetylmethionine modification. The RING-type zinc-finger motif lies at 24–65 (CPICLELIKEPVSTKCDHIFCKFCMLKLLNQKKGPSQCPLCK). Position 114 is a phosphoserine (S114). Residues K301 and K339 each participate in a glycyl lysine isopeptide (Lys-Gly) (interchain with G-Cter in SUMO2) cross-link. Phosphoserine is present on residues S395, S398, S423, and S434. Residues K457 and K517 each participate in a glycyl lysine isopeptide (Lys-Gly) (interchain with G-Cter in SUMO2) cross-link. The segment covering 530 to 542 (KMTEGTDQTEQKC) has biased composition (basic and acidic residues). 2 disordered regions span residues 530–558 (KMTE…KTKR) and 620–662 (ELEL…RQSQ). S691, S711, and S720 each carry phosphoserine. Residues 882-912 (SGSLRDQSPRDPLKCRQKEDSQGKSESKSQH) are disordered. Positions 888–910 (QSPRDPLKCRQKEDSQGKSESKS) are enriched in basic and acidic residues. A Glycyl lysine isopeptide (Lys-Gly) (interchain with G-Cter in SUMO2) cross-link involves residue K981. S982 is modified (phosphoserine; by CHEK2). The residue at position 1002 (S1002) is a Phosphoserine. Residues 1036–1061 (NSVNEVGSSTNEVGSSVNEVGSSGEN) show a composition bias toward low complexity. The disordered stretch occupies residues 1036-1070 (NSVNEVGSSTNEVGSSVNEVGSSGENIQAEPGRNR). K1073 participates in a covalent cross-link: Glycyl lysine isopeptide (Lys-Gly) (interchain with G-Cter in SUMO2). Phosphoserine is present on residues S1138, S1184, S1211, S1212, S1274, S1323, S1330, S1336, and S1382. The tract at residues 1172–1211 (FSESVQKGEFRGSPGPFTHTHLAQGHQRGAGKLESEETVS) is disordered. Disordered regions lie at residues 1321–1389 (YQSE…ILTT), 1412–1433 (VLER…DSRG), and 1452–1493 (SEKS…RSSA). Residues 1336–1360 (SDDEERETGLEEDSCQEEQSVDSDL) are compositionally biased toward acidic residues. Composition is skewed to polar residues over residues 1370-1389 (ETSL…ILTT) and 1418-1429 (SQPSHSSASLTA). The residue at position 1389 (T1389) is a Phosphothreonine. An interaction with PALB2 region spans residues 1392-1419 (RDTMQDNLLKLQQEMAELEAVLERHGSQ). Phosphoserine occurs at positions 1418, 1452, and 1518. Disordered regions lie at residues 1562–1590 (SLFS…PPSA) and 1621–1640 (REES…ERSK). Basic and acidic residues-rich tracts occupy residues 1566 to 1582 (HEPE…EPAH) and 1621 to 1631 (REESMSKEKPE). 2 consecutive BRCT domains span residues 1642–1729 (RLSM…DFEV) and 1749–1848 (RDKK…TYLV).

As to quaternary structure, heterodimer with BARD1. Part of the BRCA1-associated genome surveillance complex (BASC), which contains BRCA1, MSH2, MSH6, MLH1, ATM, BLM, PMS2 and the MRE11-RAD50-NBN protein (MRN) complex. This association could be a dynamic process changing throughout the cell cycle and within subnuclear domains. Component of the BRCA1-A complex, at least composed of BRCA1, BARD1, UIMC1/RAP80, ABRAXAS1, BRCC3/BRCC36, BABAM2 and BABAM1/NBA1. Interacts (via the BRCT domains) with ABRAXAS1 (phosphorylated form); this is important for recruitment to sites of DNA damage. Can form a heterotetramer with two molecules of ABRAXAS1 (phosphorylated form). Component of the BRCA1-RBBP8 complex. Interacts (via the BRCT domains) with RBBP8 ('Ser-327' phosphorylated form); the interaction ubiquitinates RBBP8, regulates CHEK1 activation, and involves RBBP8 in BRCA1-dependent G2/M checkpoint control on DNA damage. Associates with RNA polymerase II holoenzyme. Interacts with SMC1A, NELFB, DCLRE1C, CLSPN. CHEK1, CHEK2, BAP1, BRCC3, UBXN1 and PCLAF. Interacts (via BRCT domains) with BRIP1 (phosphorylated form). Interacts with FANCD2 (ubiquitinated form). Interacts with H2AX (phosphorylated on 'Ser-140'). Interacts (via the BRCT domains) with ACACA (phosphorylated form); the interaction prevents dephosphorylation of ACACA. Part of a BRCA complex containing BRCA1, BRCA2 and PALB2. Interacts directly with PALB2; the interaction is essential for its function in HRR. Interacts directly with BRCA2; the interaction occurs only in the presence of PALB2 which serves as the bridging protein. Interacts (via the BRCT domains) with LMO4; the interaction represses the transcriptional activity of BRCA1. Interacts (via the BRCT domains) with CCAR2 (via N-terminus); the interaction represses the transcriptional activator activity of BRCA1. Interacts with EXD2. Interacts (via C-terminus) with DHX9; this interaction is direct and links BRCA1 to the RNA polymerase II holoenzyme. Interacts with DNA helicase ZGRF1; the interaction is increased following DNA damage induction. Post-translationally, phosphorylated in response to IR, UV, and various stimuli that cause checkpoint activation, probably by ATM or ATR. Phosphorylation at Ser-982 by CHEK2 regulates mitotic spindle assembly. Phosphorylation by AURKA regulates centrosomal microtubule nucleation. Autoubiquitinated, undergoes 'Lys-6'-linked polyubiquitination. 'Lys-6'-linked polyubiquitination does not promote degradation.

It localises to the nucleus. The protein localises to the chromosome. Its subcellular location is the cytoplasm. The catalysed reaction is S-ubiquitinyl-[E2 ubiquitin-conjugating enzyme]-L-cysteine + [acceptor protein]-L-lysine = [E2 ubiquitin-conjugating enzyme]-L-cysteine + N(6)-ubiquitinyl-[acceptor protein]-L-lysine.. Its pathway is protein modification; protein ubiquitination. Its function is as follows. E3 ubiquitin-protein ligase that specifically mediates the formation of 'Lys-6'-linked polyubiquitin chains and plays a central role in DNA repair by facilitating cellular responses to DNA damage. It is unclear whether it also mediates the formation of other types of polyubiquitin chains. The BRCA1-BARD1 heterodimer coordinates a diverse range of cellular pathways such as DNA damage repair, ubiquitination and transcriptional regulation to maintain genomic stability. Regulates centrosomal microtubule nucleation. Required for appropriate cell cycle arrests after ionizing irradiation in both the S-phase and the G2 phase of the cell cycle. Required for FANCD2 targeting to sites of DNA damage. Inhibits lipid synthesis by binding to inactive phosphorylated ACACA and preventing its dephosphorylation. Contributes to homologous recombination repair (HRR) via its direct interaction with PALB2, fine-tunes recombinational repair partly through its modulatory role in the PALB2-dependent loading of BRCA2-RAD51 repair machinery at DNA breaks. Component of the BRCA1-RBBP8 complex which regulates CHEK1 activation and controls cell cycle G2/M checkpoints on DNA damage via BRCA1-mediated ubiquitination of RBBP8. Acts as a transcriptional activator. The chain is Breast cancer type 1 susceptibility protein homolog (BRCA1) from Bos taurus (Bovine).